Here is a 325-residue protein sequence, read N- to C-terminus: uncharacterized protein (325 aa).

A disordered region spans residues 1–75 (MSQPPEHPGN…PPPGYPTHLQ (75 aa)). Composition is skewed to pro residues over residues 24–39 (YPPP…PGYG) and 50–70 (YNAP…PPGY). Helical transmembrane passes span 96–116 (AVTL…VIGA), 153–173 (IVMF…HAGI), 205–225 (LLIV…GLIF), and 273–293 (LVGE…AALI).

It is found in the cell membrane. This is an uncharacterized protein from Mycobacterium tuberculosis (strain CDC 1551 / Oshkosh).